We begin with the raw amino-acid sequence, 280 residues long: 4-diphosphocytidyl-2-C-methyl-D-erythritol kinase (280 aa).

Lysine 11 is a catalytic residue. ATP is bound at residue 95 to 105; the sequence is PVGAGLGGGSS. Aspartate 137 is a catalytic residue.

It belongs to the GHMP kinase family. IspE subfamily.

The enzyme catalyses 4-CDP-2-C-methyl-D-erythritol + ATP = 4-CDP-2-C-methyl-D-erythritol 2-phosphate + ADP + H(+). It functions in the pathway isoprenoid biosynthesis; isopentenyl diphosphate biosynthesis via DXP pathway; isopentenyl diphosphate from 1-deoxy-D-xylulose 5-phosphate: step 3/6. Its function is as follows. Catalyzes the phosphorylation of the position 2 hydroxy group of 4-diphosphocytidyl-2C-methyl-D-erythritol. The protein is 4-diphosphocytidyl-2-C-methyl-D-erythritol kinase of Geobacter sp. (strain M21).